The following is a 112-amino-acid chain: Large ribosomal subunit protein uL18 (112 aa).

The protein belongs to the universal ribosomal protein uL18 family. As to quaternary structure, part of the 50S ribosomal subunit; part of the 5S rRNA/L5/L18/L25 subcomplex. Contacts the 5S and 23S rRNAs.

In terms of biological role, this is one of the proteins that bind and probably mediate the attachment of the 5S RNA into the large ribosomal subunit, where it forms part of the central protuberance. The protein is Large ribosomal subunit protein uL18 of Deinococcus deserti (strain DSM 17065 / CIP 109153 / LMG 22923 / VCD115).